The sequence spans 87 residues: Large ribosomal subunit protein bL27 (87 aa).

The tract at residues Met-1–Arg-25 is disordered. Positions Ala-7–Gln-19 are enriched in polar residues.

It belongs to the bacterial ribosomal protein bL27 family.

The chain is Large ribosomal subunit protein bL27 from Rhodococcus jostii (strain RHA1).